The chain runs to 314 residues: Transcriptional activator RhrA (314 aa).

The 101-residue stretch at 210–310 folds into the HTH araC/xylS-type domain; sequence ASIKMRVEQN…GVRPSDLRRL (101 aa). 2 DNA-binding regions (H-T-H motif) span residues 228 to 249 and 277 to 300; these read TDVAEAERITPRAIQKFFSREG and ISQIAYNVGFNDLSYFNRTFRSRY.

In terms of biological role, transcriptional activator of the rhizobactin regulon. This Rhizobium meliloti (strain 1021) (Ensifer meliloti) protein is Transcriptional activator RhrA (rhrA).